Here is a 404-residue protein sequence, read N- to C-terminus: Formate-dependent phosphoribosylglycinamide formyltransferase (404 aa).

N(1)-(5-phospho-beta-D-ribosyl)glycinamide contacts are provided by residues 25-26 and Glu85; that span reads EL. ATP is bound by residues Arg118, Lys159, 164–169, 199–202, and Glu207; these read SSGKGQ and EGFI. Positions 123–318 constitute an ATP-grasp domain; sequence RLAAEELGLP…EFELHARAIL (196 aa). Glu277 and Glu289 together coordinate Mg(2+). Residues Asp296, Lys365, and 372 to 373 each bind N(1)-(5-phospho-beta-D-ribosyl)glycinamide; that span reads RR.

It belongs to the PurK/PurT family. As to quaternary structure, homodimer.

The catalysed reaction is N(1)-(5-phospho-beta-D-ribosyl)glycinamide + formate + ATP = N(2)-formyl-N(1)-(5-phospho-beta-D-ribosyl)glycinamide + ADP + phosphate + H(+). It participates in purine metabolism; IMP biosynthesis via de novo pathway; N(2)-formyl-N(1)-(5-phospho-D-ribosyl)glycinamide from N(1)-(5-phospho-D-ribosyl)glycinamide (formate route): step 1/1. Functionally, involved in the de novo purine biosynthesis. Catalyzes the transfer of formate to 5-phospho-ribosyl-glycinamide (GAR), producing 5-phospho-ribosyl-N-formylglycinamide (FGAR). Formate is provided by PurU via hydrolysis of 10-formyl-tetrahydrofolate. This chain is Formate-dependent phosphoribosylglycinamide formyltransferase, found in Burkholderia mallei (strain NCTC 10247).